The sequence spans 416 residues: MNKQSWLLNLSLLKTHPAFRAVFLARFISIVSLGLLGVAVPVQIQMMTHSTWQVGLSVTLTGGAMFVGLMVGGVLADRYERKKVILLARGTCGIGFIGLCLNALLPEPSLLAIYLLGLWDGFFASLGVTALLAATPALVGRENLMQAGAITMLTVRLGSVNSPMIGGLLLAIGGVAWNYGLAAAGTFITLLPLLSLPALPPPPQPREHPLKSLLAGFRFLLASPLVGGIALLGGLLTMASAVRVLYPALADNWQMSAAQIGFLYAAIPLGAAIGALTSGKLAHSARPGLLMLLSTLGSFLAIGLFGLMPMWILGVVCLALFGWLSAVSSLLQYTMLQTQTPEVMLGRINGLWTAQNVTGDAIGAALLGGLGAMMTPVASASASGFGLLIIGVLLLLVLVELRHFRQTPPQVTASDS.

Topologically, residues 1-21 (MNKQSWLLNLSLLKTHPAFRA) are cytoplasmic. Residues 22–42 (VFLARFISIVSLGLLGVAVPV) traverse the membrane as a helical segment. At 43–55 (QIQMMTHSTWQVG) the chain is on the periplasmic side. The chain crosses the membrane as a helical span at residues 56–76 (LSVTLTGGAMFVGLMVGGVLA). Residues 77–83 (DRYERKK) are Cytoplasmic-facing. A helical membrane pass occupies residues 84–104 (VILLARGTCGIGFIGLCLNAL). Topologically, residues 105–109 (LPEPS) are periplasmic. A helical transmembrane segment spans residues 110-130 (LLAIYLLGLWDGFFASLGVTA). Over 131–156 (LLAATPALVGRENLMQAGAITMLTVR) the chain is Cytoplasmic. The chain crosses the membrane as a helical span at residues 157 to 177 (LGSVNSPMIGGLLLAIGGVAW). Residue Asn-178 is a topological domain, periplasmic. A helical membrane pass occupies residues 179 to 199 (YGLAAAGTFITLLPLLSLPAL). At 200-218 (PPPPQPREHPLKSLLAGFR) the chain is on the cytoplasmic side. A helical membrane pass occupies residues 219 to 239 (FLLASPLVGGIALLGGLLTMA). Residues 240-256 (SAVRVLYPALADNWQMS) are Periplasmic-facing. The chain crosses the membrane as a helical span at residues 257–277 (AAQIGFLYAAIPLGAAIGALT). At 278-287 (SGKLAHSARP) the chain is on the cytoplasmic side. Residues 288–307 (GLLMLLSTLGSFLAIGLFGL) traverse the membrane as a helical segment. The Periplasmic portion of the chain corresponds to 308–313 (MPMWIL). A helical transmembrane segment spans residues 314–336 (GVVCLALFGWLSAVSSLLQYTML). The Cytoplasmic portion of the chain corresponds to 337 to 356 (QTQTPEVMLGRINGLWTAQN). A helical membrane pass occupies residues 357–377 (VTGDAIGAALLGGLGAMMTPV). Residue Ala-378 is a topological domain, periplasmic. A helical transmembrane segment spans residues 379–399 (SASASGFGLLIIGVLLLLVLV). Topologically, residues 400–416 (ELRHFRQTPPQVTASDS) are cytoplasmic.

It belongs to the major facilitator superfamily. EntS (TC 2.A.1.38) family.

It is found in the cell inner membrane. Component of an export pathway for enterobactin. The chain is Enterobactin exporter EntS from Shigella dysenteriae serotype 1 (strain Sd197).